Consider the following 487-residue polypeptide: N-succinylglutamate 5-semialdehyde dehydrogenase (487 aa).

221-226 contributes to the NAD(+) binding site; the sequence is GSSDTG. Residues glutamate 244 and cysteine 278 contribute to the active site.

The protein belongs to the aldehyde dehydrogenase family. AstD subfamily.

It carries out the reaction N-succinyl-L-glutamate 5-semialdehyde + NAD(+) + H2O = N-succinyl-L-glutamate + NADH + 2 H(+). It functions in the pathway amino-acid degradation; L-arginine degradation via AST pathway; L-glutamate and succinate from L-arginine: step 4/5. Its function is as follows. Catalyzes the NAD-dependent reduction of succinylglutamate semialdehyde into succinylglutamate. This chain is N-succinylglutamate 5-semialdehyde dehydrogenase, found in Burkholderia cenocepacia (strain ATCC BAA-245 / DSM 16553 / LMG 16656 / NCTC 13227 / J2315 / CF5610) (Burkholderia cepacia (strain J2315)).